The chain runs to 521 residues: Organic cation/carnitine transporter 6 (521 aa).

The Cytoplasmic segment spans residues methionine 1 to serine 37. Residues leucine 38 to phenylalanine 58 form a helical membrane-spanning segment. Residues aspartate 59–arginine 123 are Extracellular-facing. Residue asparagine 79 is glycosylated (N-linked (GlcNAc...) asparagine). Residues glycine 124–isoleucine 144 form a helical membrane-spanning segment. At proline 145–leucine 154 the chain is on the cytoplasmic side. The helical transmembrane segment at valine 155–isoleucine 177 threads the bilayer. The Extracellular portion of the chain corresponds to tyrosine 178 to lysine 182. A helical membrane pass occupies residues phenylalanine 183–isoleucine 200. An ATP-binding site is contributed by isoleucine 200–arginine 207. The Cytoplasmic portion of the chain corresponds to serine 201–threonine 213. The chain crosses the membrane as a helical span at residues methionine 214–alanine 234. Topologically, residues glutamine 235–tyrosine 241 are extracellular. Residues leucine 242–leucine 262 form a helical membrane-spanning segment. The Cytoplasmic portion of the chain corresponds to glutamate 263–arginine 326. The chain crosses the membrane as a helical span at residues isoleucine 327–alanine 347. Topologically, residues alanine 348–tyrosine 356 are extracellular. Residues leucine 357–leucine 377 form a helical membrane-spanning segment. At glutamate 378–serine 385 the chain is on the cytoplasmic side. The helical transmembrane segment at valine 386 to leucine 406 threads the bilayer. The Extracellular segment spans residues glycine 407 to alanine 412. A helical membrane pass occupies residues phenylalanine 413–phenylalanine 433. Residues methionine 434–threonine 447 lie on the Cytoplasmic side of the membrane. The helical transmembrane segment at methionine 448–glycine 468 threads the bilayer. Residues arginine 469–serine 473 lie on the Extracellular side of the membrane. Residues valine 474 to proline 494 traverse the membrane as a helical segment. Residues glutamate 495–cysteine 521 lie on the Cytoplasmic side of the membrane.

It belongs to the major facilitator (TC 2.A.1) superfamily. Organic cation transporter (TC 2.A.1.19) family. As to expression, expressed in roots and stems. In the stem of secondary inflorescences, localized to the phloem. Also present in flowers, specifically in the stamen, in the filaments and the connective, and restricted to major veins in leaves.

It is found in the vacuole membrane. Its function is as follows. High affinity carnitine transporter involved in the active cellular uptake of carnitine. Also transports organic cations. The chain is Organic cation/carnitine transporter 6 (OCT6) from Arabidopsis thaliana (Mouse-ear cress).